A 185-amino-acid polypeptide reads, in one-letter code: Segregation and condensation protein B (185 aa).

The protein belongs to the ScpB family. Homodimer. Homodimerization may be required to stabilize the binding of ScpA to the Smc head domains. Component of a cohesin-like complex composed of ScpA, ScpB and the Smc homodimer, in which ScpA and ScpB bind to the head domain of Smc. The presence of the three proteins is required for the association of the complex with DNA.

It is found in the cytoplasm. Its function is as follows. Participates in chromosomal partition during cell division. May act via the formation of a condensin-like complex containing Smc and ScpA that pull DNA away from mid-cell into both cell halves. This Alkaliphilus oremlandii (strain OhILAs) (Clostridium oremlandii (strain OhILAs)) protein is Segregation and condensation protein B.